The chain runs to 419 residues: UDP-N-acetylglucosamine 1-carboxyvinyltransferase (419 aa).

22–23 (KN) lines the phosphoenolpyruvate pocket. Arg-91 provides a ligand contact to UDP-N-acetyl-alpha-D-glucosamine. The Proton donor role is filled by Cys-115. Cys-115 bears the 2-(S-cysteinyl)pyruvic acid O-phosphothioketal mark. Residues 120-124 (RPVDL), 160-163 (KVSV), Asp-305, and Val-327 contribute to the UDP-N-acetyl-alpha-D-glucosamine site.

The protein belongs to the EPSP synthase family. MurA subfamily.

It is found in the cytoplasm. The catalysed reaction is phosphoenolpyruvate + UDP-N-acetyl-alpha-D-glucosamine = UDP-N-acetyl-3-O-(1-carboxyvinyl)-alpha-D-glucosamine + phosphate. It participates in cell wall biogenesis; peptidoglycan biosynthesis. Its function is as follows. Cell wall formation. Adds enolpyruvyl to UDP-N-acetylglucosamine. In Salmonella gallinarum (strain 287/91 / NCTC 13346), this protein is UDP-N-acetylglucosamine 1-carboxyvinyltransferase.